The sequence spans 414 residues: Signal recognition particle receptor FtsY (414 aa).

Residues 216–223 (GVNGVGKT), 298–302 (DTAGR), and 362–365 (TKLD) each bind GTP.

Belongs to the GTP-binding SRP family. FtsY subfamily. Part of the signal recognition particle protein translocation system, which is composed of SRP and FtsY. SRP is a ribonucleoprotein composed of Ffh and a 4.5S RNA molecule.

It localises to the cell inner membrane. The protein resides in the cytoplasm. The enzyme catalyses GTP + H2O = GDP + phosphate + H(+). In terms of biological role, involved in targeting and insertion of nascent membrane proteins into the cytoplasmic membrane. Acts as a receptor for the complex formed by the signal recognition particle (SRP) and the ribosome-nascent chain (RNC). Interaction with SRP-RNC leads to the transfer of the RNC complex to the Sec translocase for insertion into the membrane, the hydrolysis of GTP by both Ffh and FtsY, and the dissociation of the SRP-FtsY complex into the individual components. In Haemophilus influenzae (strain ATCC 51907 / DSM 11121 / KW20 / Rd), this protein is Signal recognition particle receptor FtsY.